The sequence spans 360 residues: UDP-3-O-acylglucosamine N-acyltransferase (360 aa).

His-256 serves as the catalytic Proton acceptor. Positions 341 to 360 (EGSGAETAARPDDDRDEGRG) are disordered. The span at 349-360 (ARPDDDRDEGRG) shows a compositional bias: basic and acidic residues.

The protein belongs to the transferase hexapeptide repeat family. LpxD subfamily. Homotrimer.

It catalyses the reaction a UDP-3-O-[(3R)-3-hydroxyacyl]-alpha-D-glucosamine + a (3R)-hydroxyacyl-[ACP] = a UDP-2-N,3-O-bis[(3R)-3-hydroxyacyl]-alpha-D-glucosamine + holo-[ACP] + H(+). Its pathway is bacterial outer membrane biogenesis; LPS lipid A biosynthesis. In terms of biological role, catalyzes the N-acylation of UDP-3-O-acylglucosamine using 3-hydroxyacyl-ACP as the acyl donor. Is involved in the biosynthesis of lipid A, a phosphorylated glycolipid that anchors the lipopolysaccharide to the outer membrane of the cell. This is UDP-3-O-acylglucosamine N-acyltransferase from Rhodopseudomonas palustris (strain TIE-1).